The chain runs to 636 residues: Zinc finger protein 90 (636 aa).

The region spanning 14 to 85 is the KRAB domain; sequence VTFKDVAVNF…EKEIQRPFCP (72 aa). 7 consecutive C2H2-type zinc fingers follow at residues 208–230, 250–272, 278–300, 306–328, 334–356, 362–384, and 390–412; these read YKCDKCRKSFIHRSSLNKHEKIH, HECADCGKTFLWRTQLTEHQRIH, FECNVCGKAFRHSSSLGQHENAH, YQCSLCGKAFQRSSSLVQHQRIH, YRCNLCGRSFRHSTSLTQHEVTH, FQCKECGKAFSRCSSLVQHERTH, and FECSICGRAFGQSPSLYKHMRIH. The interval 227 to 247 is disordered; the sequence is EKIHKGDPYSNGTDQGAQSGR. Lys-444 is covalently cross-linked (Glycyl lysine isopeptide (Lys-Gly) (interchain with G-Cter in SUMO2)). 6 C2H2-type zinc fingers span residues 446 to 468, 494 to 516, 522 to 544, 550 to 572, 578 to 600, and 606 to 628; these read YHCNDCGKDFGHITDFSEHQRLH, YQCNVCGKAFKRSTSFIEHHRIH, YECNECGEAFSRLSSLTQHERTH, YECIDCGKAFSQSSSLIQHERTH, YECNECGRAFRKKTNLHDHQRTH, and YACKECGRNFSRSSALTKHHRVH.

It belongs to the krueppel C2H2-type zinc-finger protein family. As to quaternary structure, interacts (via N- and C-termini) with REST (via zinc-finger DNA-binding domain); the interaction inhibits REST repressor activity. In terms of tissue distribution, brain, spleen, thymus, and testis. Expressed in heart.

Its subcellular location is the nucleus. Inhibits the transcriptional repressor activity of REST by inhibiting its binding to DNA, thereby derepressing transcription of REST target genes. In Mus musculus (Mouse), this protein is Zinc finger protein 90 (Zfp90).